Here is a 477-residue protein sequence, read N- to C-terminus: Ribulose bisphosphate carboxylase large chain (477 aa).

A propeptide spanning residues M1 to S2 is cleaved from the precursor. The residue at position 3 (P3) is an N-acetylproline. K14 is subject to N6,N6,N6-trimethyllysine. Substrate contacts are provided by N123 and T173. The active-site Proton acceptor is K175. K177 is a substrate binding site. 3 residues coordinate Mg(2+): K201, D203, and E204. At K201 the chain carries N6-carboxylysine. The Proton acceptor role is filled by H294. Substrate is bound by residues R295, H327, and S379.

The protein belongs to the RuBisCO large chain family. Type I subfamily. As to quaternary structure, heterohexadecamer of 8 large chains and 8 small chains; disulfide-linked. The disulfide link is formed within the large subunit homodimers. Requires Mg(2+) as cofactor. The disulfide bond which can form in the large chain dimeric partners within the hexadecamer appears to be associated with oxidative stress and protein turnover.

The protein localises to the plastid. It localises to the chloroplast. It carries out the reaction 2 (2R)-3-phosphoglycerate + 2 H(+) = D-ribulose 1,5-bisphosphate + CO2 + H2O. The catalysed reaction is D-ribulose 1,5-bisphosphate + O2 = 2-phosphoglycolate + (2R)-3-phosphoglycerate + 2 H(+). RuBisCO catalyzes two reactions: the carboxylation of D-ribulose 1,5-bisphosphate, the primary event in carbon dioxide fixation, as well as the oxidative fragmentation of the pentose substrate in the photorespiration process. Both reactions occur simultaneously and in competition at the same active site. The polypeptide is Ribulose bisphosphate carboxylase large chain (Nicotiana otophora (Tobacco)).